The primary structure comprises 247 residues: Coproheme decarboxylase (247 aa).

Fe-coproporphyrin III contacts are provided by residues Arg-129, 143–147 (YPMDK), His-170, Gln-183, and Ser-221. Tyr-143 is a catalytic residue.

It belongs to the ChdC family. Type 1 subfamily. Fe-coproporphyrin III serves as cofactor.

The enzyme catalyses Fe-coproporphyrin III + 2 H2O2 + 2 H(+) = heme b + 2 CO2 + 4 H2O. The catalysed reaction is Fe-coproporphyrin III + H2O2 + H(+) = harderoheme III + CO2 + 2 H2O. It catalyses the reaction harderoheme III + H2O2 + H(+) = heme b + CO2 + 2 H2O. Its pathway is porphyrin-containing compound metabolism; protoheme biosynthesis. Its function is as follows. Involved in coproporphyrin-dependent heme b biosynthesis. Catalyzes the decarboxylation of Fe-coproporphyrin III (coproheme) to heme b (protoheme IX), the last step of the pathway. The reaction occurs in a stepwise manner with a three-propionate intermediate. This is Coproheme decarboxylase from Bacillus cereus (strain B4264).